The chain runs to 151 residues: Leukocyte cell-derived chemotaxin-2 (151 aa).

Residues 1 to 18 form the signal peptide; the sequence is MFSTKALLLAGLISTALA. 3 disulfides stabilise this stretch: cysteine 25/cysteine 60, cysteine 36/cysteine 41, and cysteine 99/cysteine 142. Zn(2+) is bound by residues histidine 53, aspartate 57, and histidine 138.

The protein belongs to the LECT2/MIM-1 family. Interacts with MET. In terms of tissue distribution, highly expressed in adult and fetal liver and weakly in testis. Not expressed in bone marrow.

It is found in the cytoplasm. It localises to the secreted. Has a neutrophil chemotactic activity. Also a positive regulator of chondrocyte proliferation. Does not show metalloendopeptidase activity. In Homo sapiens (Human), this protein is Leukocyte cell-derived chemotaxin-2 (LECT2).